The sequence spans 368 residues: Outer membrane protein assembly factor BamC (368 aa).

The first 18 residues, 1–18 (MTTKFFIGTAIAVSVLSA), serve as a signal peptide directing secretion. A lipid anchor (N-palmitoyl cysteine) is attached at C19. C19 carries S-diacylglycerol cysteine lipidation.

This sequence belongs to the BamC family. As to quaternary structure, part of the Bam complex.

Its subcellular location is the cell outer membrane. In terms of biological role, part of the outer membrane protein assembly complex, which is involved in assembly and insertion of beta-barrel proteins into the outer membrane. The polypeptide is Outer membrane protein assembly factor BamC (Pseudoalteromonas atlantica (strain T6c / ATCC BAA-1087)).